The primary structure comprises 364 residues: Capsular polysaccharide phosphotransferase fcs1 (364 aa).

It belongs to the stealth family.

Part of a group II capsule biosynthesis locus. This Haemophilus influenzae protein is Capsular polysaccharide phosphotransferase fcs1 (fcs1).